The chain runs to 251 residues: Triosephosphate isomerase (251 aa).

Position 9 to 11 (9 to 11 (NWK)) interacts with substrate. The Electrophile role is filled by H95. E167 functions as the Proton acceptor in the catalytic mechanism. Residues G173, S213, and 234 to 235 (GG) each bind substrate. S213 is subject to Phosphoserine.

It belongs to the triosephosphate isomerase family. In terms of assembly, homodimer.

The protein localises to the cytoplasm. It carries out the reaction D-glyceraldehyde 3-phosphate = dihydroxyacetone phosphate. Its pathway is carbohydrate biosynthesis; gluconeogenesis. The protein operates within carbohydrate degradation; glycolysis; D-glyceraldehyde 3-phosphate from glycerone phosphate: step 1/1. Its function is as follows. Involved in the gluconeogenesis. Catalyzes stereospecifically the conversion of dihydroxyacetone phosphate (DHAP) to D-glyceraldehyde-3-phosphate (G3P). This Bacillus cereus (strain B4264) protein is Triosephosphate isomerase.